The following is a 209-amino-acid chain: Transmembrane protein 52 (209 aa).

The first 32 residues, 1 to 32 (MARGPLAARGLRLLLPLLPLLPLLPLPQVALG), serve as a signal peptide directing secretion. Residues 56–76 (VGLILLAVLLLLLCGVTAGCV) form a helical membrane-spanning segment. The tract at residues 145–209 (AYSLYTPEPP…QLPPCSPGAP (65 aa)) is disordered. The segment covering 159–170 (EAVKMAKPREEG) has biased composition (basic and acidic residues). Residues 186-202 (LETTPVPQESGPNTQLP) are compositionally biased toward polar residues.

It is found in the membrane. The chain is Transmembrane protein 52 (TMEM52) from Homo sapiens (Human).